The primary structure comprises 541 residues: Threonine--tRNA ligase catalytic subunit (541 aa).

The segment at 135–429 (DHRIIGERMD…LLEHFRGKLP (295 aa)) is catalytic. Residues cysteine 227, histidine 278, and histidine 406 each contribute to the Zn(2+) site.

The protein belongs to the class-II aminoacyl-tRNA synthetase family. As to quaternary structure, homodimer. Probably interacts with its editing subunit. Zn(2+) is required as a cofactor.

Its subcellular location is the cytoplasm. The catalysed reaction is tRNA(Thr) + L-threonine + ATP = L-threonyl-tRNA(Thr) + AMP + diphosphate + H(+). In terms of biological role, catalyzes the attachment of threonine to tRNA(Thr) in a two-step reaction: L-threonine is first activated by ATP to form Thr-AMP and then transferred to the acceptor end of tRNA(Thr). Also activates L-serine and transfers it to tRNA(Thr) but cannot deacylate incorrectly charged amino acid; unlike most archaea the editing function is found in a freestanding protein. This Metallosphaera sedula (strain ATCC 51363 / DSM 5348 / JCM 9185 / NBRC 15509 / TH2) protein is Threonine--tRNA ligase catalytic subunit.